The primary structure comprises 335 residues: Serine protease 42 (335 aa).

An N-terminal signal peptide occupies residues Met-1–Ala-24. A glycan (N-linked (GlcNAc...) asparagine) is linked at Asn-67. The Peptidase S1 domain occupies Ile-79–Asn-315. A disulfide bridge connects residues Cys-104 and Cys-120. The Charge relay system role is filled by His-119. N-linked (GlcNAc...) asparagine glycosylation occurs at Asn-140. Asp-165 acts as the Charge relay system in catalysis. An N-linked (GlcNAc...) asparagine glycan is attached at Asn-176. Disulfide bonds link Cys-199-Cys-273, Cys-232-Cys-253, and Cys-263-Cys-291. Ser-267 serves as the catalytic Charge relay system.

It belongs to the peptidase S1 family. In terms of tissue distribution, testis-specific. Mainly detected in round spermatids at all the eminiferous epithelial stages (at protein level).

It localises to the cytoplasm. The protein localises to the cell membrane. Its function is as follows. Plays a role in spermatogenesis. Involved in germ cell survival during meiosis. Lacks protease activity in vitro. The protein is Serine protease 42 of Mus musculus (Mouse).